We begin with the raw amino-acid sequence, 450 residues long: MREIISIHIGQAGIQVGNSCWELYCLEHGIQPDGTMPSDSTVGACHDAFNTFFSETSSGQHVPRAVFLDLEPTVIDEVRTGTYRQLFHPEQLISGKEDAANNFARGHYTVGREIVDTCLERLRKLADNCTGLQGFLVFNAVGGGTGSGLGSLLLERLSVDFGKKSKLGFTIYPSPQVSTAVVEPYNSVLSTHSLLEHTDVVVLLDNEAIYDICRRSLDIERPTYSNLNRLISQTISSLTTSLRFDGAINVDITEFQTNLVPYPRIHFMLSSYAPVISSAKAYHEQFSVPEITTSVFEPSNMMAKCDPRHGKYMACCLMYRGDVVPKDVNTAVAAIKAKRTIQFVDWCPTGFKCGINYQPPSVVPGGDLAKVQRAVCMISNNTAVAEVFSRIDHKFDLMYSKRAFVHWYVGEGMEEGEFSEAREDLAALEKDYEEVGGEGAEDDDEEGDEY.

Positions 11, 71, 144, 145, 179, 206, and 228 each coordinate GTP. Residue E71 coordinates Mg(2+). E254 is an active-site residue. T349 carries the phosphothreonine modification. Residues 431–450 (DYEEVGGEGAEDDDEEGDEY) form a disordered region.

It belongs to the tubulin family. As to quaternary structure, dimer of alpha and beta chains. A typical microtubule is a hollow water-filled tube with an outer diameter of 25 nm and an inner diameter of 15 nM. Alpha-beta heterodimers associate head-to-tail to form protofilaments running lengthwise along the microtubule wall with the beta-tubulin subunit facing the microtubule plus end conferring a structural polarity. Microtubules usually have 13 protofilaments but different protofilament numbers can be found in some organisms and specialized cells. Mg(2+) is required as a cofactor. Undergoes a tyrosination/detyrosination cycle, the cyclic removal and re-addition of a C-terminal tyrosine residue by the enzymes tubulin tyrosine carboxypeptidase (TTCP) and tubulin tyrosine ligase (TTL), respectively.

Its subcellular location is the cytoplasm. It is found in the cytoskeleton. It catalyses the reaction GTP + H2O = GDP + phosphate + H(+). Tubulin is the major constituent of microtubules, a cylinder consisting of laterally associated linear protofilaments composed of alpha- and beta-tubulin heterodimers. Microtubules grow by the addition of GTP-tubulin dimers to the microtubule end, where a stabilizing cap forms. Below the cap, tubulin dimers are in GDP-bound state, owing to GTPase activity of alpha-tubulin. This chain is Tubulin alpha-1 chain (TUBA1), found in Arabidopsis thaliana (Mouse-ear cress).